A 61-amino-acid chain; its full sequence is Large ribosomal subunit protein uL30 (61 aa).

Belongs to the universal ribosomal protein uL30 family. In terms of assembly, part of the 50S ribosomal subunit.

The polypeptide is Large ribosomal subunit protein uL30 (Chromobacterium violaceum (strain ATCC 12472 / DSM 30191 / JCM 1249 / CCUG 213 / NBRC 12614 / NCIMB 9131 / NCTC 9757 / MK)).